The chain runs to 363 residues: GDP-fucose transporter 1 (363 aa).

The next 8 helical transmembrane spans lie at 33–55 (FLLR…ISMV), 75–97 (VTFY…ATCC), 110–129 (LKVA…MITF), 139–161 (VPFY…YLLL), 166–184 (SFYA…WLGI), 194–213 (SLTG…LNAI), 226–248 (IWRL…MIVL), and 263–285 (AHFW…VTGL).

Belongs to the TPT transporter family. SLC35C subfamily.

It is found in the golgi apparatus membrane. It carries out the reaction GMP(out) + GDP-beta-L-fucose(in) = GMP(in) + GDP-beta-L-fucose(out). Its function is as follows. Antiporter specific for GDP-l-fucose and depending on the concomitant reverse transport of GMP. Involved in GDP-fucose import from the cytoplasm into the Golgi lumen. The sequence is that of GDP-fucose transporter 1 (Slc35c1) from Mus musculus (Mouse).